We begin with the raw amino-acid sequence, 353 residues long: Abasic site processing protein HMCES (353 aa).

Residue Cys2 is the Nucleophile of the active site. Cys2 carries the post-translational modification Thiazolidine linkage to a ring-opened DNA abasic site. Residue Glu127 is part of the active site. Residues Lys148 and Lys151 each participate in a glycyl lysine isopeptide (Lys-Gly) (interchain with G-Cter in SUMO2) cross-link. At Ser160 the chain carries Phosphoserine. Residues Lys274 and Lys275 each participate in a glycyl lysine isopeptide (Lys-Gly) (interchain with G-Cter in SUMO2) cross-link. A disordered region spans residues 292–353 (TKSPKKEVPD…DEPMAKKPNS (62 aa)). At Ser294 the chain carries Phosphoserine. Residues 295–307 (PKKEVPDSPKKDA) are compositionally biased toward basic and acidic residues. A Glycyl lysine isopeptide (Lys-Gly) (interchain with G-Cter in SUMO2) cross-link involves residue Lys305. Ser321 carries the phosphoserine modification. Positions 332-338 (SFLDRWL) match the PIP-box motif. A compositionally biased stretch (basic and acidic residues) spans 336 to 353 (RWLKQEKEDEPMAKKPNS). Glycyl lysine isopeptide (Lys-Gly) (interchain with G-Cter in SUMO2) cross-links involve residues Lys339 and Lys342.

The protein belongs to the SOS response-associated peptidase family. As to quaternary structure, interacts (via PIP-box motif) with PCNA. Expressed in embryonic stem cells.

It localises to the chromosome. Its activity is regulated as follows. Formation and reversal of DNA-protein cross-link depends on DNA context. Catalyzes formation of the thiazolidine linkage in presence of abasic sites in single-stranded DNA. Mediates the reversal of the thiazolidine cross-link in presence of double stranded DNA. Functionally, sensor of abasic sites in single-stranded DNA (ssDNA) required to preserve genome integrity by promoting error-free repair of abasic sites. Acts as an enzyme that recognizes and binds abasic sites in ssDNA at replication forks and chemically modifies the lesion by forming a covalent cross-link with DNA: forms a stable thiazolidine linkage between a ring-opened abasic site and the alpha-amino and sulfhydryl substituents of its N-terminal catalytic cysteine residue. Promotes error-free repair by protecting abasic sites from translesion synthesis (TLS) polymerases and endonucleases that are error-prone and would generate mutations and double-strand breaks. The HMCES DNA-protein cross-link is then either reversed or degraded. HMCES is able to catalyze the reversal of its thiazolidine cross-link and cycle between a cross-link and a non-cross-linked state depending on DNA context: mediates self-reversal of the thiazolidine cross-link in double stranded DNA, allowing APEX1 to initiate downstream repair of abasic sites. The HMCES DNA-protein cross-link can also be degraded by the SPRTN metalloprotease following unfolding by the BRIP1/FANCJ helicase. Has preference for ssDNA, but can also accommodate double-stranded DNA with 3' or 5' overhang (dsDNA), and dsDNA-ssDNA 3' junction. Plays a protective role during somatic hypermutation of immunoglobulin genes in B-cells: acts via its ability to form covalent cross-links with abasic sites, thereby limiting the accumulation of deletions in somatic hypermutation target regions. Also involved in class switch recombination (CSR) in B-cells independently of the formation of a DNA-protein cross-link: acts by binding and protecting ssDNA overhangs to promote DNA double-strand break repair through the microhomology-mediated alternative-end-joining (Alt-EJ) pathway. Acts as a protease: mediates autocatalytic processing of its N-terminal methionine in order to expose the catalytic cysteine. This is Abasic site processing protein HMCES from Mus musculus (Mouse).